Reading from the N-terminus, the 790-residue chain is Phenylalanine--tRNA ligase beta subunit (790 aa).

Positions 40–149 (AEKVSGVVVG…IDAPVGTDIN (110 aa)) constitute a tRNA-binding domain. Residues 402-479 (NKQIKINLSI…RIYGYSKLPE (78 aa)) form the B5 domain. Aspartate 457, aspartate 463, glutamate 466, and glutamate 467 together coordinate Mg(2+). The region spanning 698–789 (SKYPSVSRDI…LKTKFNIEQR (92 aa)) is the FDX-ACB domain.

It belongs to the phenylalanyl-tRNA synthetase beta subunit family. Type 1 subfamily. In terms of assembly, tetramer of two alpha and two beta subunits. Requires Mg(2+) as cofactor.

The protein localises to the cytoplasm. The catalysed reaction is tRNA(Phe) + L-phenylalanine + ATP = L-phenylalanyl-tRNA(Phe) + AMP + diphosphate + H(+). This Francisella tularensis subsp. tularensis (strain SCHU S4 / Schu 4) protein is Phenylalanine--tRNA ligase beta subunit.